We begin with the raw amino-acid sequence, 119 residues long: Beta-2-microglobulin (119 aa).

An N-terminal signal peptide occupies residues 1–20 (MSPSVALAVLALLSLSGLEA). Residues 25–114 (PKIQVYSRHP…VTLSGPRTVK (90 aa)) form the Ig-like C1-type domain. C45 and C100 are oxidised to a cystine.

This sequence belongs to the beta-2-microglobulin family. As to quaternary structure, heterodimer of an alpha chain and a beta chain. Beta-2-microglobulin is the beta-chain of major histocompatibility complex class I molecules.

It localises to the secreted. Component of the class I major histocompatibility complex (MHC). Involved in the presentation of peptide antigens to the immune system. The polypeptide is Beta-2-microglobulin (B2M) (Macaca fascicularis (Crab-eating macaque)).